The following is a 528-amino-acid chain: Tyrosine-protein kinase transforming protein Yes (528 aa).

The span at 1 to 12 (DKGPAMKYRTDN) shows a compositional bias: basic and acidic residues. Residues 1–35 (DKGPAMKYRTDNTPEPISSHVSHYGSDSSQATQSP) form a disordered region. Positions 18–29 (SSHVSHYGSDSS) are enriched in low complexity. The 62-residue stretch at 81 to 142 (GGGTVFVALY…PSNYVAPADS (62 aa)) folds into the SH3 domain. One can recognise an SH2 domain in the interval 148-245 (WYFGKMGRKD…GLCHKLTTVC (98 aa)). Residues 267 to 520 (LRLEVKLGQG…YIQSFLEDYF (254 aa)) form the Protein kinase domain. Residues 273–281 (LGQGCFGEV) and Lys295 contribute to the ATP site. Asp386 functions as the Proton acceptor in the catalytic mechanism. Phosphotyrosine; by autocatalysis is present on Tyr416.

This sequence belongs to the protein kinase superfamily. Tyr protein kinase family. SRC subfamily.

It catalyses the reaction L-tyrosyl-[protein] + ATP = O-phospho-L-tyrosyl-[protein] + ADP + H(+). In Galliformes (Y73SV), this protein is Tyrosine-protein kinase transforming protein Yes (V-YES).